The following is a 208-amino-acid chain: Ras-related protein M-Ras (208 aa).

GTP is bound by residues Asp21, Gly22, Gly23, Val24, Gly25, Lys26, Ser27, Ala28, Phe38, Val39, Pro40, Tyr42, Pro44, and Thr45. Ser27 is a binding site for Mg(2+). The short motif at 42 to 50 (YDPTIEDSY) is the Effector region element. Positions 45 and 67 each coordinate Mg(2+). Residues Gly70, Asn126, Lys127, Asp129, Ser156, Ala157, and Lys158 each contribute to the GTP site. Cysteine methyl ester is present on Cys205. Cys205 carries the S-geranylgeranyl cysteine lipid modification. Residues 206–208 (VIL) constitute a propeptide, removed in mature form.

Belongs to the small GTPase superfamily. Ras family. Component of the SHOC2-MRAS-PP1c (SMP) holophosphatase complex consisting of SHOC2, GTP-bound M-Ras/MRAS and the catalytic subunit of protein phosphatase 1 (either PPP1CA, PPP1CB or PPP1CC). Interacts (active GTP-bound form) with both SHOC2 and PP1c (all isoforms) to form a tertiary complex; SHOC2 and PP1c preferably bind M-Ras/MRAS, but they also bind K-Ras/KRAS, N-Ras/NRAS and H-Ras/HRAS. Interacts with RGL3. Interacts (active GTP-bound form preferentially) with RGS14. Requires Mg(2+) as cofactor. In terms of tissue distribution, expression highly restricted to the brain and heart.

Its subcellular location is the cell membrane. It carries out the reaction GTP + H2O = GDP + phosphate + H(+). Its function is as follows. Signal transducer in the Ras-MAPK signaling pathway that regulates cell proliferation and survival. Core component of the SHOC2-MRAS-PP1c (SMP) holophosphatase complex that regulates the MAPK pathway activation. The formation of the SMP complex only occurs when MRAS is GTP-bound. MRAS has low intrinsic GTPase activity and may require additional factors for activation. The SMP complex specifically dephosphorylates the inhibitory phosphorylation at 'Ser-259' of RAF1 kinase, 'Ser-365' of BRAF kinase and 'Ser-214' of ARAF kinase, stimulating their kinase activities. This is Ras-related protein M-Ras (MRAS) from Homo sapiens (Human).